Reading from the N-terminus, the 289-residue chain is Probable endonuclease 4 (289 aa).

9 residues coordinate Zn(2+): His74, His115, Glu150, Asp184, His187, His218, Asp231, His233, and Glu263.

The protein belongs to the AP endonuclease 2 family. The cofactor is Zn(2+).

It catalyses the reaction Endonucleolytic cleavage to 5'-phosphooligonucleotide end-products.. Endonuclease IV plays a role in DNA repair. It cleaves phosphodiester bonds at apurinic or apyrimidinic (AP) sites, generating a 3'-hydroxyl group and a 5'-terminal sugar phosphate. The polypeptide is Probable endonuclease 4 (Mycoplasma capricolum subsp. capricolum (strain California kid / ATCC 27343 / NCTC 10154)).